The chain runs to 314 residues: Thymidylate synthase (314 aa).

Residues Arg-32 and 176–177 contribute to the dUMP site; that span reads RR. Residue Cys-196 is the Nucleophile of the active site. DUMP-binding positions include 216 to 219, Asn-227, and 257 to 259; these read RSCD and HLY. A (6R)-5,10-methylene-5,6,7,8-tetrahydrofolate-binding site is contributed by Asp-219. Ala-313 is a (6R)-5,10-methylene-5,6,7,8-tetrahydrofolate binding site.

This sequence belongs to the thymidylate synthase family. Bacterial-type ThyA subfamily. As to quaternary structure, homodimer.

The protein resides in the cytoplasm. The catalysed reaction is dUMP + (6R)-5,10-methylene-5,6,7,8-tetrahydrofolate = 7,8-dihydrofolate + dTMP. The protein operates within pyrimidine metabolism; dTTP biosynthesis. In terms of biological role, catalyzes the reductive methylation of 2'-deoxyuridine-5'-monophosphate (dUMP) to 2'-deoxythymidine-5'-monophosphate (dTMP) while utilizing 5,10-methylenetetrahydrofolate (mTHF) as the methyl donor and reductant in the reaction, yielding dihydrofolate (DHF) as a by-product. This enzymatic reaction provides an intracellular de novo source of dTMP, an essential precursor for DNA biosynthesis. The chain is Thymidylate synthase from Novosphingobium aromaticivorans (strain ATCC 700278 / DSM 12444 / CCUG 56034 / CIP 105152 / NBRC 16084 / F199).